A 185-amino-acid chain; its full sequence is Ribosome-recycling factor (185 aa).

The protein belongs to the RRF family.

The protein resides in the cytoplasm. Its function is as follows. Responsible for the release of ribosomes from messenger RNA at the termination of protein biosynthesis. May increase the efficiency of translation by recycling ribosomes from one round of translation to another. This chain is Ribosome-recycling factor, found in Carboxydothermus hydrogenoformans (strain ATCC BAA-161 / DSM 6008 / Z-2901).